Reading from the N-terminus, the 256-residue chain is Probable sulfite/organosulfonate exporter TauE (256 aa).

The next 8 membrane-spanning stretches (helical) occupy residues 5 to 25, 33 to 53, 76 to 96, 103 to 123, 142 to 162, 172 to 190, 199 to 219, and 236 to 256; these read LLLPLLGLQALLGAGTYFQTV, IVMGVTSGLGLAPVATVAAVV, AVAAAAIGILPSVVVGVLVLE, ATLLQLLLGAVILYGGLSAAL, VFGGLLSGMFGVSGPPLIFQF, IRCALILVFTVTSTVRTLF, AAVCVQAAIAVPVVVIATLLG, and FGVLIGIGASLMLPAISAWVL.

The protein belongs to the 4-toluene sulfonate uptake permease (TSUP) (TC 2.A.102) family.

It localises to the cell inner membrane. Its function is as follows. Could be a sulfite/organosulfonate exporter with a wide substrate range, including 3-sulfolactate and 3-sulfopyruvate. The chain is Probable sulfite/organosulfonate exporter TauE from Cupriavidus necator (strain ATCC 17699 / DSM 428 / KCTC 22496 / NCIMB 10442 / H16 / Stanier 337) (Ralstonia eutropha).